Reading from the N-terminus, the 151-residue chain is Large-conductance mechanosensitive channel (151 aa).

Helical transmembrane passes span 14–34 (VVDM…VNSL) and 85–105 (GLFV…FLLV).

The protein belongs to the MscL family. As to quaternary structure, homopentamer.

It is found in the cell inner membrane. Its function is as follows. Channel that opens in response to stretch forces in the membrane lipid bilayer. May participate in the regulation of osmotic pressure changes within the cell. The polypeptide is Large-conductance mechanosensitive channel (Chlorobaculum tepidum (strain ATCC 49652 / DSM 12025 / NBRC 103806 / TLS) (Chlorobium tepidum)).